Consider the following 589-residue polypeptide: Serine/threonine-protein kinase shk2 (589 aa).

Positions 23–125 (GIIRSGWVML…WMDLISSRAL (103 aa)) constitute a PH domain. Positions 129–142 (VSSPMNPKHQVHVG) constitute a CRIB domain. The 258-residue stretch at 309–566 (FNVKHKLGQG…AAELLTHSFL (258 aa)) folds into the Protein kinase domain. Residues 315-323 (LGQGASGSV) and lysine 343 each bind ATP. The active-site Proton acceptor is the aspartate 434.

Belongs to the protein kinase superfamily. STE Ser/Thr protein kinase family. STE20 subfamily.

It carries out the reaction L-seryl-[protein] + ATP = O-phospho-L-seryl-[protein] + ADP + H(+). It catalyses the reaction L-threonyl-[protein] + ATP = O-phospho-L-threonyl-[protein] + ADP + H(+). In terms of biological role, forms an activated complex with GTP-bound Ras-like cdc42. Participates in Ras-dependent morphological control and mating response pathways. This chain is Serine/threonine-protein kinase shk2 (shk2), found in Schizosaccharomyces pombe (strain 972 / ATCC 24843) (Fission yeast).